The following is a 248-amino-acid chain: MLYLHDVWVNWFEGEENGYNVCHFYEWRKDDTIELLDQVPLLKVDSTLYHYIENELLELPQKMLEDVHHKAYIRKNHERLQQEYCFVVTDGKGIIAIDTIGYNVPIRKSRLIPRQEQMVYEMVENVQAEKYEFQVEEMEKEHHILSPSPFIMNGLTRKERQLKQLLFMALDQLHTTKNTAEIRYWFTEWDPSAYGMVQHMEFEDIWAKLYEEAKTGWSEKHEQLCERLVKGQPFFEKLWEMENEQKVN.

The protein belongs to the UPF0736 family.

This is UPF0736 protein BCAH187_A1335 from Bacillus cereus (strain AH187).